The following is a 632-amino-acid chain: tRNA uridine 5-carboxymethylaminomethyl modification enzyme MnmG (632 aa).

FAD is bound by residues 13–18 (GGGHAG), valine 125, and serine 180. 273–287 (GPRYCPSIEDKVMRF) provides a ligand contact to NAD(+). Glutamine 370 contributes to the FAD binding site.

This sequence belongs to the MnmG family. As to quaternary structure, homodimer. Heterotetramer of two MnmE and two MnmG subunits. FAD is required as a cofactor.

It localises to the cytoplasm. In terms of biological role, NAD-binding protein involved in the addition of a carboxymethylaminomethyl (cmnm) group at the wobble position (U34) of certain tRNAs, forming tRNA-cmnm(5)s(2)U34. This Vibrio vulnificus (strain YJ016) protein is tRNA uridine 5-carboxymethylaminomethyl modification enzyme MnmG.